A 243-amino-acid chain; its full sequence is Derlin-1.1 (243 aa).

The Cytoplasmic segment spans residues 1-20 (MSSPAEYYKSLPPISKAYGT). A helical membrane pass occupies residues 21-41 (LCFFTTVLVQLQILHPLFLYL). Over 42 to 55 (DYPLVFKKFEIWRL) the chain is Lumenal. Residues 56–76 (LTSFFFLAPFSMKFGIRLLMI) form a helical membrane-spanning segment. At 77–94 (ARYGVMLEKGAFDKRTAD) the chain is on the cytoplasmic side. The chain crosses the membrane as a helical span at residues 95-115 (FLWMMIFGAISLLVLSIIPLF). At 116-157 (NSFFLGIPMVSMLLYVWSRENPNAQINIYGLVQLRSFYLPWA) the chain is on the lumenal side. A helical membrane pass occupies residues 158–178 (MLLLDVIFGSSLMPGLLGIMV). At 179–243 (GHLYYFFAVL…FRGRSYRLNQ (65 aa)) the chain is on the cytoplasmic side. The disordered stretch occupies residues 219-243 (SPVRPPANGNSGSGVFRGRSYRLNQ).

This sequence belongs to the derlin family. Expressed in roots, stalks, leaves, immature ears, embryo and endosperm.

The protein resides in the endoplasmic reticulum membrane. In terms of biological role, may be involved in the degradation process of specific misfolded endoplasmic reticulum (ER) luminal proteins. In Zea mays (Maize), this protein is Derlin-1.1 (DER1.1).